A 71-amino-acid chain; its full sequence is Large ribosomal subunit protein uL29 (71 aa).

The protein belongs to the universal ribosomal protein uL29 family.

The protein is Large ribosomal subunit protein uL29 (rpl29) of Halobacterium salinarum (strain ATCC 700922 / JCM 11081 / NRC-1) (Halobacterium halobium).